The primary structure comprises 408 residues: LL-diaminopimelate aminotransferase (408 aa).

Residues Tyr15 and Gly42 each contribute to the substrate site. Residues Tyr72, 108–109 (SK), Tyr132, Asn187, Tyr218, and 246–248 (SFS) contribute to the pyridoxal 5'-phosphate site. Residues Lys109, Tyr132, and Asn187 each contribute to the substrate site. Lys249 is modified (N6-(pyridoxal phosphate)lysine). The pyridoxal 5'-phosphate site is built by Arg257 and Asn292. Substrate is bound by residues Asn292 and Arg388.

It belongs to the class-I pyridoxal-phosphate-dependent aminotransferase family. LL-diaminopimelate aminotransferase subfamily. As to quaternary structure, homodimer. The cofactor is pyridoxal 5'-phosphate.

It carries out the reaction (2S,6S)-2,6-diaminopimelate + 2-oxoglutarate = (S)-2,3,4,5-tetrahydrodipicolinate + L-glutamate + H2O + H(+). The protein operates within amino-acid biosynthesis; L-lysine biosynthesis via DAP pathway; LL-2,6-diaminopimelate from (S)-tetrahydrodipicolinate (aminotransferase route): step 1/1. Involved in the synthesis of meso-diaminopimelate (m-DAP or DL-DAP), required for both lysine and peptidoglycan biosynthesis. Catalyzes the direct conversion of tetrahydrodipicolinate to LL-diaminopimelate. This chain is LL-diaminopimelate aminotransferase, found in Prochlorococcus marinus (strain MIT 9312).